We begin with the raw amino-acid sequence, 123 residues long: MMTLQEEKIQAPVFFKEYVKGRFILNIGEYNHPLILSATQVLEYQDKIDDIQSIKKSHLDLILATNPEIILIGTGEKQLLPPLEIINQIAKAGKSVDFMASDTACKTYNLLVNENRNVSCIII.

The protein resides in the cell membrane. This is 13 kDa major membrane protein from Francisella tularensis subsp. holarctica (strain LVS).